A 215-amino-acid chain; its full sequence is uncharacterized protein (215 aa).

Catalysis depends on charge relay system residues serine 114, aspartate 162, and histidine 194.

It belongs to the AB hydrolase superfamily. AB hydrolase 2 family.

This is an uncharacterized protein from Rickettsia felis (strain ATCC VR-1525 / URRWXCal2) (Rickettsia azadi).